Consider the following 387-residue polypeptide: Sulfate adenylyltransferase (387 aa).

Belongs to the sulfate adenylyltransferase family.

The catalysed reaction is sulfate + ATP + H(+) = adenosine 5'-phosphosulfate + diphosphate. It functions in the pathway sulfur metabolism; hydrogen sulfide biosynthesis; sulfite from sulfate: step 1/3. This Deinococcus radiodurans (strain ATCC 13939 / DSM 20539 / JCM 16871 / CCUG 27074 / LMG 4051 / NBRC 15346 / NCIMB 9279 / VKM B-1422 / R1) protein is Sulfate adenylyltransferase (sat).